The chain runs to 59 residues: Photosystem II reaction center protein K (59 aa).

The propeptide occupies 1–22 (MLNIFSLICLNSALHSSSFFFA). A helical membrane pass occupies residues 38-58 (MPVIPVLFFLLALVWQAAVSF).

The protein belongs to the PsbK family. In terms of assembly, PSII is composed of 1 copy each of membrane proteins PsbA, PsbB, PsbC, PsbD, PsbE, PsbF, PsbH, PsbI, PsbJ, PsbK, PsbL, PsbM, PsbT, PsbX, PsbY, PsbZ, Psb30/Ycf12, at least 3 peripheral proteins of the oxygen-evolving complex and a large number of cofactors. It forms dimeric complexes.

It is found in the plastid. It localises to the chloroplast thylakoid membrane. Its function is as follows. One of the components of the core complex of photosystem II (PSII). PSII is a light-driven water:plastoquinone oxidoreductase that uses light energy to abstract electrons from H(2)O, generating O(2) and a proton gradient subsequently used for ATP formation. It consists of a core antenna complex that captures photons, and an electron transfer chain that converts photonic excitation into a charge separation. In Calycanthus floridus var. glaucus (Eastern sweetshrub), this protein is Photosystem II reaction center protein K.